The primary structure comprises 185 residues: UPF0200 protein Mevan_0592 (185 aa).

8-15 (GMPGSGKS) serves as a coordination point for ATP.

Belongs to the UPF0200 family.

This is UPF0200 protein Mevan_0592 from Methanococcus vannielii (strain ATCC 35089 / DSM 1224 / JCM 13029 / OCM 148 / SB).